Consider the following 63-residue polypeptide: Transmembrane protein 033R (63 aa).

In Dryophytes versicolor (chameleon treefrog), this protein is Transmembrane protein 033R.